The following is a 711-amino-acid chain: Hydroperoxide isomerase ALOXE3 (711 aa).

Residues 2–119 (AVYRLCVTTG…TVELRPGTAR (118 aa)) form the PLAT domain. The Lipoxygenase domain occupies 119 to 711 (RTICQDALPL…PPLIENSVSI (593 aa)). 5 residues coordinate Fe cation: His-408, His-413, His-588, Asn-592, and Ile-711.

Belongs to the lipoxygenase family. Fe cation is required as a cofactor.

Its subcellular location is the cytoplasm. The enzyme catalyses a hydroperoxyeicosatetraenoate = a hydroxy-epoxy-eicosatetraenoate. It catalyses the reaction a hydroperoxyeicosatetraenoate = an oxoeicosatetraenoate + H2O. The catalysed reaction is (12R)-hydroperoxy-(5Z,8Z,10E,14Z)-eicosatetraenoate = (8R)-hydroxy-(11R,12R)-epoxy-(5Z,9E,14Z)-eicosatrienoate. It carries out the reaction (12S)-hydroperoxy-(5Z,8Z,10E,14Z)-eicosatetraenoate = (8R)-hydroxy-(11S,12S)-epoxy-(5Z,9E,14Z)-eicosatrienoate. The enzyme catalyses (12S)-hydroperoxy-(5Z,8Z,10E,14Z)-eicosatetraenoate = (10R)-hydroxy-(11S,12S)-epoxy-(5Z,8Z,14Z)-eicosatrienoate. It catalyses the reaction (15S)-hydroperoxy-(5Z,8Z,11Z,13E)-eicosatetraenoate = (13R)-hydroxy-(14S,15S)-epoxy-(5Z,8Z,11Z)-eicosatrienoate. The catalysed reaction is (5S)-hydroperoxy-(6E,8Z,11Z,14Z)-eicosatetraenoate = 7R-hydroxy-5S,6S-epoxy-(8Z,11Z,14Z)-eicosatrienoate. It carries out the reaction (13S)-hydroperoxy-(9Z,11E)-octadecadienoate = 11-hydroxy-(12S,13S)-epoxy-(9Z)-octadecenoate. The enzyme catalyses N-[omega-(9R)-hydroperoxy-(10E,12Z)-octadecadienoyloxy]acyl-beta-D-glucosyl-(1&lt;-&gt;1)-octadecasphing-4E-enine = a N-[omega-(9R,10R)-epoxy-(13R)-hydroxy-(11E)-octadecenoyloxy]acyl-beta-D-glucosyl-(1&lt;-&gt;1)-sphing-4E-enine. It catalyses the reaction a N-[omega-(9R)-hydroperoxy-(10E,12Z)-octadecadienoyloxy]-acylsphin-4E-enine = a N-[omega-(9R,10R)-epoxy-(13R)-hydroxy-(11E)-octadecenoyloxy]-acylsphing-4E-enine. The catalysed reaction is (12R)-hydroperoxy-(5Z,8Z,10E,14Z)-eicosatetraenoate = 12-oxo-(5Z,8Z,10E,14Z)-eicosatetraenoate + H2O. It carries out the reaction (12S)-hydroperoxy-(5Z,8Z,10E,14Z)-eicosatetraenoate = 12-oxo-(5Z,8Z,10E,14Z)-eicosatetraenoate + H2O. The enzyme catalyses (15S)-hydroperoxy-(5Z,8Z,11Z,13E)-eicosatetraenoate = 15-oxo-(5Z,8Z,11Z,13E)-eicosatetraenoate + H2O. It catalyses the reaction (13S)-hydroperoxy-(9Z,11E)-octadecadienoate = 13-oxo-(9Z,11E)-octadecadienoate + H2O. The catalysed reaction is (8S)-hydroperoxy-(5Z,9E,11Z,14Z)-eicosatetraenoate = (10R)-hydroxy-(8S,9S)-epoxy-(5Z,11Z,14Z)-eicosatrienoate. It carries out the reaction (8R)-hydroperoxy-(5Z,9E,11Z,14Z)-eicosatetraenoate = 8-oxo-(5Z,9E,11Z,14Z)-eicosatetraenoate + H2O. The enzyme catalyses (8S)-hydroperoxy-(5Z,9E,11Z,14Z)-eicosatetraenoate = 8-oxo-(5Z,9E,11Z,14Z)-eicosatetraenoate + H2O. Its pathway is lipid metabolism; hydroperoxy eicosatetraenoic acid biosynthesis. It participates in lipid metabolism; sphingolipid metabolism. In terms of biological role, non-heme iron-containing lipoxygenase which is atypical in that it displays a prominent hydroperoxide isomerase activity and a reduced lipoxygenases activity. The hydroperoxide isomerase activity catalyzes the isomerization of hydroperoxides, derived from arachidonic and linoleic acid by ALOX12B, into hepoxilin-type epoxyalcohols and ketones. In presence of oxygen, oxygenates polyunsaturated fatty acids, including arachidonic acid, to produce fatty acid hydroperoxides. In the skin, acts downstream of ALOX12B on the linoleate moiety of esterified omega-hydroxyacyl-sphingosine (EOS) ceramides to produce an epoxy-ketone derivative, a crucial step in the conjugation of omega-hydroxyceramide to membrane proteins. Therefore plays a crucial role in the synthesis of corneocytes lipid envelope and the establishment of the skin barrier to water loss. In parallel, it may have a signaling function in barrier formation through the production of hepoxilins metabolites. Also plays a role in adipocyte differentiation through hepoxilin A3 and hepoxilin B3 production which in turn activate PPARG. Through the production of hepoxilins in the spinal cord, it may regulate inflammatory tactile allodynia. This Rattus norvegicus (Rat) protein is Hydroperoxide isomerase ALOXE3.